Consider the following 534-residue polypeptide: Coiled-coil domain-containing protein 183 (534 aa).

Coiled-coil stretches lie at residues 10–54 (EEQT…NIRR), 136–209 (DASK…DMKI), and 323–396 (LAQR…HSNM).

The sequence is that of Coiled-coil domain-containing protein 183 (CCDC183) from Homo sapiens (Human).